The sequence spans 365 residues: Aminotransferase poxL (365 aa).

Arg92 lines the pyridoxal 5'-phosphate pocket. Lys193 is modified (N6-(pyridoxal phosphate)lysine). A pyridoxal 5'-phosphate-binding site is contributed by Glu229.

This sequence belongs to the class-IV pyridoxal-phosphate-dependent aminotransferase family. It depends on pyridoxal 5'-phosphate as a cofactor.

It functions in the pathway secondary metabolite biosynthesis. Functionally, aminotransferase; part of the gene cluster that mediates the biosynthesis of oxaleimides, cytotoxic compounds containing an unusual disubstituted succinimide moiety. The first step of the pathway is provided by the HR-PKS poxF that serves in a new mode of collaborative biosynthesis with the PKS-NRPS poxE, by providing the olefin containing amino acid substrate via the synthesis of an ACP-bound dec-4-enoate. The cytochrome P450 monooxygenase poxM-catalyzed oxidation at the alpha-position creates the enzyme-bound 2-hydroxydec-4-enoyl-ACP thioester, which may be prone to spontaneous hydrolysis to yield 2-hydroxydec-4-enoic acid due to increased electrophilicity of the carbonyl. 2-hydroxydec-4-enoic acid can then be further oxidized by poxM to yield the alpha-ketoacid 2-oxodec-4-enoicacid, which is reductively aminated by the aminotransferase poxL to yield (S,E)-2-aminodec-4-enoic acid. The Hybrid PKS-NRPS synthetase poxE then performs condensation between the octaketide product of its PKS modules and the amino group of (S,E)-2-aminodec-4-enoic acid which is activated and incorporated by the adenylation domain. The resulting aminoacyl product can be cyclized by the Diels-Alderase PoxQ and reductively released by the reductive (R) domain of poxE to yield an aldehyde intermediate. The released aldehyde is then substrate for a Knoevenagel condensation by the hydrolyase poxO followed by an oxidation at the 5-position of the pyrrolidone ring. The presence of the olefin from the amino acid building block allows for migration of the substituted allyl group to occur. This allylic transposition reaction takes place in a conjugate addition, semipinacol-like fashion to yield a succinimide intermediate. Iterative two-electron oxidations of the C7 methyl of the succinimide intermediate to the carboxylic acid can be catalyzed by one of two remaining cytochrome P450 monooxygenasess poxC or poxD to yield oxaleimide A. Subsequent oxidation yields the maleimide scaffold oxaleimide I. Both oxaleimide A and oxaleimide I can undergo oxidative modifications in the decalin ring to yield the series of products oxaleimides B to H. This Penicillium oxalicum protein is Aminotransferase poxL.